Reading from the N-terminus, the 291-residue chain is Pyridoxal kinase PdxY (291 aa).

Substrate-binding positions include Ser9 and 44 to 45; that span reads TQ. ATP-binding positions include Asp112, Val144, Glu149, Lys182, and 207–210; that span reads RPHL. Asp221 is a binding site for substrate.

Belongs to the pyridoxine kinase family. PdxY subfamily. In terms of assembly, homodimer. Mg(2+) serves as cofactor.

The catalysed reaction is pyridoxal + ATP = pyridoxal 5'-phosphate + ADP + H(+). Its pathway is cofactor metabolism; pyridoxal 5'-phosphate salvage; pyridoxal 5'-phosphate from pyridoxal: step 1/1. Pyridoxal kinase involved in the salvage pathway of pyridoxal 5'-phosphate (PLP). Catalyzes the phosphorylation of pyridoxal to PLP. This chain is Pyridoxal kinase PdxY, found in Photobacterium profundum (strain SS9).